The sequence spans 162 residues: ATP synthase subunit b 1 (162 aa).

Residues 1 to 21 (MLLTAEFWVAVAFVAFLVIVW) form a helical membrane-spanning segment.

This sequence belongs to the ATPase B chain family. F-type ATPases have 2 components, F(1) - the catalytic core - and F(0) - the membrane proton channel. F(1) has five subunits: alpha(3), beta(3), gamma(1), delta(1), epsilon(1). F(0) has three main subunits: a(1), b(2) and c(10-14). The alpha and beta chains form an alternating ring which encloses part of the gamma chain. F(1) is attached to F(0) by a central stalk formed by the gamma and epsilon chains, while a peripheral stalk is formed by the delta and b chains.

It localises to the cell inner membrane. Functionally, f(1)F(0) ATP synthase produces ATP from ADP in the presence of a proton or sodium gradient. F-type ATPases consist of two structural domains, F(1) containing the extramembraneous catalytic core and F(0) containing the membrane proton channel, linked together by a central stalk and a peripheral stalk. During catalysis, ATP synthesis in the catalytic domain of F(1) is coupled via a rotary mechanism of the central stalk subunits to proton translocation. Component of the F(0) channel, it forms part of the peripheral stalk, linking F(1) to F(0). The chain is ATP synthase subunit b 1 from Methylorubrum populi (strain ATCC BAA-705 / NCIMB 13946 / BJ001) (Methylobacterium populi).